The chain runs to 440 residues: Cobyrinate a,c-diamide synthase (440 aa).

The 182-residue stretch at 247 to 428 folds into the GATase cobBQ-type domain; the sequence is RIAIAYDAAF…MHLYFPSNPR (182 aa). Cys329 (nucleophile) is an active-site residue.

It belongs to the CobB/CbiA family. Requires Mg(2+) as cofactor.

The catalysed reaction is cob(II)yrinate + 2 L-glutamine + 2 ATP + 2 H2O = cob(II)yrinate a,c diamide + 2 L-glutamate + 2 ADP + 2 phosphate + 2 H(+). Its pathway is cofactor biosynthesis; adenosylcobalamin biosynthesis; cob(II)yrinate a,c-diamide from sirohydrochlorin (anaerobic route): step 10/10. In terms of biological role, catalyzes the ATP-dependent amidation of the two carboxylate groups at positions a and c of cobyrinate, using either L-glutamine or ammonia as the nitrogen source. This chain is Cobyrinate a,c-diamide synthase, found in Picrophilus torridus (strain ATCC 700027 / DSM 9790 / JCM 10055 / NBRC 100828 / KAW 2/3).